The chain runs to 183 residues: Photosystem I assembly protein Ycf4 (183 aa).

2 consecutive transmembrane segments (helical) span residues 23 to 43 and 64 to 84; these read WASV…SSYF and VMSF…LTII.

It belongs to the Ycf4 family.

The protein localises to the plastid. It localises to the chloroplast thylakoid membrane. Functionally, seems to be required for the assembly of the photosystem I complex. The polypeptide is Photosystem I assembly protein Ycf4 (Stigeoclonium helveticum (Green alga)).